Consider the following 444-residue polypeptide: Xylose isomerase (444 aa).

Active-site residues include His-101 and Asp-104. Residues Glu-232, Glu-268, His-271, Asp-296, Asp-307, Asp-309, and Asp-339 each coordinate Mg(2+).

The protein belongs to the xylose isomerase family. As to quaternary structure, homotetramer. Mg(2+) is required as a cofactor.

Its subcellular location is the cytoplasm. The catalysed reaction is alpha-D-xylose = alpha-D-xylulofuranose. The chain is Xylose isomerase from Thermotoga maritima (strain ATCC 43589 / DSM 3109 / JCM 10099 / NBRC 100826 / MSB8).